Here is a 343-residue protein sequence, read N- to C-terminus: N-acetyl-gamma-glutamyl-phosphate reductase (343 aa).

Residue C146 is part of the active site.

Belongs to the NAGSA dehydrogenase family. Type 1 subfamily.

Its subcellular location is the cytoplasm. It catalyses the reaction N-acetyl-L-glutamate 5-semialdehyde + phosphate + NADP(+) = N-acetyl-L-glutamyl 5-phosphate + NADPH + H(+). Its pathway is amino-acid biosynthesis; L-arginine biosynthesis; N(2)-acetyl-L-ornithine from L-glutamate: step 3/4. In terms of biological role, catalyzes the NADPH-dependent reduction of N-acetyl-5-glutamyl phosphate to yield N-acetyl-L-glutamate 5-semialdehyde. The polypeptide is N-acetyl-gamma-glutamyl-phosphate reductase (Paenarthrobacter aurescens (strain TC1)).